The chain runs to 456 residues: tRNA modification GTPase MnmE (456 aa).

(6S)-5-formyl-5,6,7,8-tetrahydrofolate-binding residues include R21, E85, and K124. Positions Q220–A379 constitute a TrmE-type G domain. Residue N230 coordinates K(+). Residues N230–S235, S249–T255, and D274–G277 each bind GTP. S234 is a binding site for Mg(2+). K(+) is bound by residues S249, I251, and T254. T255 contributes to the Mg(2+) binding site. K456 is a (6S)-5-formyl-5,6,7,8-tetrahydrofolate binding site.

Belongs to the TRAFAC class TrmE-Era-EngA-EngB-Septin-like GTPase superfamily. TrmE GTPase family. As to quaternary structure, homodimer. Heterotetramer of two MnmE and two MnmG subunits. Requires K(+) as cofactor.

It is found in the cytoplasm. In terms of biological role, exhibits a very high intrinsic GTPase hydrolysis rate. Involved in the addition of a carboxymethylaminomethyl (cmnm) group at the wobble position (U34) of certain tRNAs, forming tRNA-cmnm(5)s(2)U34. The sequence is that of tRNA modification GTPase MnmE from Leptospira borgpetersenii serovar Hardjo-bovis (strain JB197).